A 237-amino-acid chain; its full sequence is 2-C-methyl-D-erythritol 4-phosphate cytidylyltransferase (237 aa).

Belongs to the IspD/TarI cytidylyltransferase family. IspD subfamily.

The catalysed reaction is 2-C-methyl-D-erythritol 4-phosphate + CTP + H(+) = 4-CDP-2-C-methyl-D-erythritol + diphosphate. It functions in the pathway isoprenoid biosynthesis; isopentenyl diphosphate biosynthesis via DXP pathway; isopentenyl diphosphate from 1-deoxy-D-xylulose 5-phosphate: step 2/6. Its function is as follows. Catalyzes the formation of 4-diphosphocytidyl-2-C-methyl-D-erythritol from CTP and 2-C-methyl-D-erythritol 4-phosphate (MEP). This is 2-C-methyl-D-erythritol 4-phosphate cytidylyltransferase from Acidithiobacillus ferrooxidans (strain ATCC 23270 / DSM 14882 / CIP 104768 / NCIMB 8455) (Ferrobacillus ferrooxidans (strain ATCC 23270)).